A 193-amino-acid chain; its full sequence is Cuticle protein 18.7 (193 aa).

Component of the cuticle of migratory locust which contains more than 100 different structural proteins. This chain is Cuticle protein 18.7, found in Locusta migratoria (Migratory locust).